The following is a 227-amino-acid chain: Urease accessory protein UreF (227 aa).

Belongs to the UreF family. As to quaternary structure, ureD, UreF and UreG form a complex that acts as a GTP-hydrolysis-dependent molecular chaperone, activating the urease apoprotein by helping to assemble the nickel containing metallocenter of UreC. The UreE protein probably delivers the nickel.

Its subcellular location is the cytoplasm. Functionally, required for maturation of urease via the functional incorporation of the urease nickel metallocenter. The protein is Urease accessory protein UreF of Actinobacillus pleuropneumoniae (Haemophilus pleuropneumoniae).